A 756-amino-acid chain; its full sequence is ATP-dependent DNA helicase Hel308 (756 aa).

Residues glutamine 29 and 47–54 (SATASGKT) contribute to the ATP site. A Helicase ATP-binding domain is found at 34–201 (RAGLLNGENI…WLNAKLVKSD (168 aa)). Positions 146–149 (DEIH) match the DEAH box motif. A Helicase C-terminal domain is found at 233-435 (SLINLTVDTL…PTSLKFHTLS (203 aa)).

The protein belongs to the helicase family. Hel308 subfamily. In terms of assembly, monomer.

The catalysed reaction is Couples ATP hydrolysis with the unwinding of duplex DNA by translocating in the 3'-5' direction.. It carries out the reaction ATP + H2O = ADP + phosphate + H(+). Functionally, DNA-dependent ATPase and 3'-5' DNA helicase that may be involved in repair of stalled replication forks. The sequence is that of ATP-dependent DNA helicase Hel308 from Caldivirga maquilingensis (strain ATCC 700844 / DSM 13496 / JCM 10307 / IC-167).